An 88-amino-acid chain; its full sequence is MGTARFLRAVLLLSVLLMVTFPALLSAEHHDGRVDICRLPSDSGDCLRFFEVWYFDGTTCTKFVYGGYGGNDNRFPTEKACMKRCAKA.

The signal sequence occupies residues 1–27 (MGTARFLRAVLLLSVLLMVTFPALLSA). The propeptide occupies 28 to 33 (EHHDGR). The BPTI/Kunitz inhibitor domain maps to 37–85 (CRLPSDSGDCLRFFEVWYFDGTTCTKFVYGGYGGNDNRFPTEKACMKRC). 2 disulfide bridges follow: cysteine 37-cysteine 85 and cysteine 60-cysteine 81.

Belongs to the venom Kunitz-type family. 03 (sub-Kunitz) subfamily. As to expression, expressed by the venom gland.

It is found in the secreted. Functionally, serine protease inhibitor that inhibits trypsin at a molar ratio of 1:1. This chain is Kunitz-type U15-theraphotoxin-Hhn1c, found in Cyriopagopus hainanus (Chinese bird spider).